A 453-amino-acid chain; its full sequence is Frizzled/smoothened-like sans CRD protein G (453 aa).

Positions 1-24 (MIYILKNFIIILFFLLIILKRIES) are cleaved as a signal peptide. The Extracellular segment spans residues 25 to 89 (QSLPSLPSPT…PFFTLDEWNK (65 aa)). 2 N-linked (GlcNAc...) asparagine glycosylation sites follow: N49 and N67. A helical transmembrane segment spans residues 90–110 (FLYMSLVMGTISFLCGLFLLI). Residues 111–124 (TYSPIVNKTHNRHT) lie on the Cytoplasmic side of the membrane. Residues 125–145 (IGVMCMSFGVCLAMCSDMWNF) traverse the membrane as a helical segment. Residues 146 to 170 (GSNFTDQKSICPSPGQYLTTSNSRC) lie on the Extracellular side of the membrane. N-linked (GlcNAc...) asparagine glycosylation occurs at N148. A helical transmembrane segment spans residues 171–191 (LGSGIVLQFGGVFGFLNWTLL). Topologically, residues 192–209 (SFDLFMNIKGIITKNYDK) are cytoplasmic. Residues 210-230 (YYFVATFIIAIIFTFVPIVND) form a helical membrane-spanning segment. The Extracellular segment spans residues 231–250 (QYSMSYIGLGCWLGSAVYQL). A helical membrane pass occupies residues 251 to 271 (IFFWILLSICLIVSSVFIILI). The Cytoplasmic portion of the chain corresponds to 272-296 (LKEIYIIIKQSKQKTSLKGNIRPLL). The helical transmembrane segment at 297–317 (CITVTSFAFFYMFFYYISIVI) threads the bilayer. Over 318 to 352 (EGDYYERILNEYTDCLMDPTKDVSECKFPRMSVAN) the chain is Extracellular. Residues 353 to 373 (EFVFLLCLRLLGIGAFIFYGI) traverse the membrane as a helical segment. Residues 374 to 453 (NKEVKKIWLN…DDNFKPIIIK (80 aa)) are Cytoplasmic-facing.

The protein belongs to the G-protein coupled receptor Fz/Smo family.

The protein resides in the membrane. The polypeptide is Frizzled/smoothened-like sans CRD protein G (fscG) (Dictyostelium discoideum (Social amoeba)).